The following is a 507-amino-acid chain: Transcription factor SOX-9 (507 aa).

Disordered regions lie at residues 1–67 and 160–250; these read MNLL…SEED and RLRV…AGKV. A compositionally biased stretch (low complexity) spans 30–41; it reads SAGSPCPSGSGS. A compositionally biased stretch (polar residues) spans 42 to 52; it reads DTENTRPQENT. 2 stretches are compositionally biased toward basic and acidic residues: residues 56–67 and 160–174; these read GEPDLKKESEED and RLRV…DYKY. The dimerization (DIM) stretch occupies residues 63 to 103; the sequence is ESEEDKFPVCIREAVSQVLKGYDWTLVPMPVRVNGSSKNKP. The interval 63-103 is PQA; it reads ESEEDKFPVCIREAVSQVLKGYDWTLVPMPVRVNGSSKNKP. A Phosphoserine; by PKA modification is found at Ser-64. A DNA-binding region (HMG box) is located at residues 105–173; sequence VKRPMNAFMV…QHKKDHPDYK (69 aa). Ser-211 is subject to Phosphoserine; by PKA. The tract at residues 224 to 307 is transactivation domain (TAM); it reads PGEHSGQSQG…LPPNGHPGVP (84 aa). 2 short sequence motifs (9aaTAD) span residues 275 to 284 and 290 to 298; these read IGELSSDVIS and DVNEFDQYL. The segment at 335 to 429 is disordered; that stretch reads WMSKQQAPPP…PFNLPHYSPS (95 aa). Positions 341-369 are enriched in pro residues; that stretch reads APPPPPQQPPQAPQAPQAPPQQQAPPQQP. The span at 378-420 shows a compositional bias: polar residues; it reads HTLTTLSSEPGQSQRTHIKTEQLSPSHYSEQQQHSPQQISYSP. Positions 392 to 507 are transactivation domain (TAC); the sequence is RTHIKTEQLS…QPVYTQLTRP (116 aa). Residue Lys-396 forms a Glycyl lysine isopeptide (Lys-Gly) (interchain with G-Cter in ubiquitin) linkage. The short motif at 458–466 is the 9aaTAD 3 element; the sequence is SGLYSTFTY. A disordered region spans residues 477–507; the sequence is PIADTSGVPSIPQTHSPQHWEQPVYTQLTRP. Positions 483–507 are enriched in polar residues; sequence GVPSIPQTHSPQHWEQPVYTQLTRP.

As to quaternary structure, homodimer; homodimerization is required for activity. Interacts (via C-terminus) with ZNF219; forming a complex that binds to the COL2A1 promoter and activates COL2A1 expression. Interacts with DDRGK1. Interacts with EP300/p300. Interacts with beta-catenin (CTNNB1); inhibiting CTNNB1 activity by competing with the binding sites of TCF/LEF within CTNNB1. Post-translationally, acetylated; acetylation impairs nuclear localization and ability to transactivate expression of target genes. Deacetylated by SIRT1. Phosphorylation at Ser-64 and Ser-211 by PKA increases transcriptional activity and may help delay chondrocyte maturation downstream of PTHLH/PTHrP signaling. Phosphorylation at either Ser-64 or Ser-211 is required for sumoylation, but phosphorylation is not dependent on sumoylation. Phosphorylated on tyrosine residues; tyrosine dephosphorylation by PTPN11/SHP2 blocks SOX9 phosphorylation by PKA and subsequent SUMOylation. In terms of processing, sumoylated; phosphorylation at either Ser-64 or Ser-211 is required for sumoylation. Sumoylation is induced by BMP signaling pathway. Post-translationally, ubiquitinated; ubiquitination leads to proteasomal degradation and is negatively regulated by DDRGK1. In terms of tissue distribution, expressed in the intestinal epithelium (at protein level). Expressed in progenitor cells in various organs, including chondroprogenitors, osteoprogenitors and preadipocytes, but is not expressed in most differentiated cell types such as osteoblasts and adipocytes, with the exception of chondrocytes. Highly expressed in developing chondrogenic tissues. Also expressed in some non-chondrogenic tissues such as notochord, otic vesicle and neural tube.

Its subcellular location is the nucleus. Its function is as follows. Transcription factor that plays a key role in chondrocytes differentiation and skeletal development. Specifically binds the 5'-ACAAAG-3' DNA motif present in enhancers and super-enhancers and promotes expression of genes important for chondrogenesis, including cartilage matrix protein-coding genes COL2A1, COL4A2, COL9A1, COL11A2 and ACAN, SOX5 and SOX6. Also binds to some promoter regions. Plays a central role in successive steps of chondrocyte differentiation. Absolutely required for precartilaginous condensation, the first step in chondrogenesis during which skeletal progenitors differentiate into prechondrocytes. Together with SOX5 and SOX6, required for overt chondrogenesis when condensed prechondrocytes differentiate into early stage chondrocytes, the second step in chondrogenesis. Later, required to direct hypertrophic maturation and block osteoblast differentiation of growth plate chondrocytes: maintains chondrocyte columnar proliferation, delays prehypertrophy and then prevents osteoblastic differentiation of chondrocytes by lowering beta-catenin (CTNNB1) signaling and RUNX2 expression. Also required for chondrocyte hypertrophy, both indirectly, by keeping the lineage fate of chondrocytes, and directly, by remaining present in upper hypertrophic cells and transactivating COL10A1 along with MEF2C. Low lipid levels are the main nutritional determinant for chondrogenic commitment of skeletal progenitor cells: when lipids levels are low, FOXO (FOXO1 and FOXO3) transcription factors promote expression of SOX9, which induces chondrogenic commitment and suppresses fatty acid oxidation. Mechanistically, helps, but is not required, to remove epigenetic signatures of transcriptional repression and deposit active promoter and enhancer marks at chondrocyte-specific genes. Acts in cooperation with the Hedgehog pathway-dependent GLI (GLI1 and GLI3) transcription factors. In addition to cartilage development, also acts as a regulator of proliferation and differentiation in epithelial stem/progenitor cells: involved in the lung epithelium during branching morphogenesis, by balancing proliferation and differentiation and regulating the extracellular matrix. Controls epithelial branching during kidney development. The sequence is that of Transcription factor SOX-9 from Mus musculus (Mouse).